The chain runs to 279 residues: tRNA (guanine-N(1)-)-methyltransferase (279 aa).

S-adenosyl-L-methionine contacts are provided by residues Gly-117 and 141 to 146 (LGDYVL). Residues 256-279 (WTPDGSGFRAGGDPVADSSDTNEP) are disordered.

It belongs to the RNA methyltransferase TrmD family. In terms of assembly, homodimer.

It localises to the cytoplasm. It catalyses the reaction guanosine(37) in tRNA + S-adenosyl-L-methionine = N(1)-methylguanosine(37) in tRNA + S-adenosyl-L-homocysteine + H(+). Specifically methylates guanosine-37 in various tRNAs. This chain is tRNA (guanine-N(1)-)-methyltransferase, found in Kineococcus radiotolerans (strain ATCC BAA-149 / DSM 14245 / SRS30216).